We begin with the raw amino-acid sequence, 180 residues long: Endogenous alpha-amylase/subtilisin inhibitor (180 aa).

Cystine bridges form between Cys-42–Cys-89 and Cys-143–Cys-147.

The protein belongs to the protease inhibitor I3 (leguminous Kunitz-type inhibitor) family.

Functionally, inhibitor of endogenous alpha-amylase (wheat also produces an exogenous inhibitor which inactivates alpha-amylase from animal and insect origin). This inhibitor can also inhibit subtilisin. This is Endogenous alpha-amylase/subtilisin inhibitor from Triticum aestivum (Wheat).